Reading from the N-terminus, the 485-residue chain is E-selectin (485 aa).

Residues 1–22 (MIVSQYLSALTFVLLLFKESRT) form the signal peptide. The C-type lectin domain occupies 23–140 (WSYHASTEMM…CTKQKLALCY (118 aa)). At 23-430 (WSYHASTEMM…CEAPTVSQTP (408 aa)) the chain is on the extracellular side. Disulfide bonds link Cys-41-Cys-139, Cys-112-Cys-131, Cys-144-Cys-155, Cys-149-Cys-164, Cys-166-Cys-175, Cys-181-Cys-224, Cys-194-Cys-206, Cys-210-Cys-237, Cys-242-Cys-286, Cys-255-Cys-268, Cys-272-Cys-299, Cys-304-Cys-349, Cys-335-Cys-362, Cys-367-Cys-408, and Cys-394-Cys-421. Residues Asn-61, Asn-79, and Asn-88 are each glycosylated (N-linked (GlcNAc...) asparagine). Positions 102, 104, and 110 each coordinate Ca(2+). A carbohydrate is bound by residues 102-110 (EPNNKQSDE), 114-119 (EIYIKR), and 127-129 (NDE). Ca(2+) contacts are provided by Asn-127 and Asp-128. Residues 141–176 (KAACNPTPCGSHGECVETINNYTCQCHPGFKGLKCE) form the EGF-like domain. A glycan (N-linked (GlcNAc...) asparagine) is linked at Asn-161. Sushi domains are found at residues 179–239 (VTCP…KCNV), 240–301 (VKCD…TCKA), 302–364 (VSCA…VCEV), and 365–423 (VRCS…TCEA). A glycan (N-linked (GlcNAc...) asparagine) is linked at Asn-203. A glycan (N-linked (GlcNAc...) asparagine) is linked at Asn-265. 2 N-linked (GlcNAc...) asparagine glycosylation sites follow: Asn-312 and Asn-316. 2 N-linked (GlcNAc...) asparagine glycosylation sites follow: Asn-379 and Asn-401. Residues 431–453 (LAVGLSTAGVSLVTIPSFLFWLL) traverse the membrane as a helical segment. The Cytoplasmic portion of the chain corresponds to 454–485 (KRLQKKAKKFSPASSCSSLKSNGCYSTPSKLI). A disordered region spans residues 466–485 (ASSCSSLKSNGCYSTPSKLI).

It belongs to the selectin/LECAM family. Interacts with SELPLG/PSGL1 and PODXL2 through the sialyl Lewis X epitope. SELPLG sulfation appears not to be required for this interaction.

The protein localises to the cell membrane. In terms of biological role, cell-surface glycoprotein having a role in immunoadhesion. Mediates in the adhesion of blood neutrophils in cytokine-activated endothelium through interaction with SELPLG/PSGL1. May have a role in capillary morphogenesis. In Bos taurus (Bovine), this protein is E-selectin (SELE).